The chain runs to 344 residues: Membrane progestin receptor delta (344 aa).

Residues 1–51 (MLSLKLPQLLQVHQVPRVFWEDGIMSGYRRPTSSALDCVLSSFQMTNETVN) are Cytoplasmic-facing. The helical transmembrane segment at 52 to 72 (IWTHFLPTWYFLWRLLALAGG) threads the bilayer. Residues 73–83 (PGFRAEPYHWP) are Extracellular-facing. A helical transmembrane segment spans residues 84–104 (LLVFLLPACLYPFASCCAHTF). The Cytoplasmic portion of the chain corresponds to 105–113 (SSMSPRMRH). A helical membrane pass occupies residues 114 to 134 (ICYFLDYGALSLYSLGCAFPY). The Extracellular portion of the chain corresponds to 135–147 (AAYSMPASWLHGH). The helical transmembrane segment at 148–168 (LHQFFVPAAALNSFLCTGLSC) threads the bilayer. The Cytoplasmic segment spans residues 169 to 217 (YSRFLELESPGLSKVLRTGAFAYPFLFDNLPLFYRLGLCWGRGHGCGQE). Residues 218 to 238 (ALSTSHGYHLFCALLTGFLFA) form a helical membrane-spanning segment. Residues 239–258 (SHLPERLAPGRFDYIGHSHQ) are Extracellular-facing. The chain crosses the membrane as a helical span at residues 259 to 279 (LFHICAVLGTHFQLEAVLADM). Residues 280–292 (GSRRAWLATQEPA) lie on the Cytoplasmic side of the membrane. A helical transmembrane segment spans residues 293–313 (LGLAGTVATLVLAAAGNLLII). Over 314 to 344 (AAFTATLLRAPSTCPLLQGGPLEGGTQAKQQ) the chain is Extracellular.

Belongs to the ADIPOR family. In terms of assembly, homodimer. Brain specific. Highly expressed in the hypothalamus, also expressed in forebrain, amygdala, corpus callosum and spinal cord.

It is found in the cell membrane. Functionally, plasma membrane progesterone (P4) receptor coupled to G proteins. Seems to act through a G(s) mediated pathway. Involved in neurosteroid inhibition of apoptosis. May be involved in regulating rapid P4 signaling in the nervous system. Also binds dehydroepiandrosterone (DHEA), pregnanolone, pregnenolone and allopregnanolone. The protein is Membrane progestin receptor delta of Homo sapiens (Human).